A 78-amino-acid chain; its full sequence is Large ribosomal subunit protein bL28 (78 aa).

This sequence belongs to the bacterial ribosomal protein bL28 family.

In Prochlorococcus marinus (strain MIT 9211), this protein is Large ribosomal subunit protein bL28.